The primary structure comprises 176 residues: Peptide deformylase (176 aa).

Fe cation is bound by residues Cys-100 and His-142. The active site involves Glu-143. Residue His-146 participates in Fe cation binding.

Belongs to the polypeptide deformylase family. It depends on Fe(2+) as a cofactor.

It catalyses the reaction N-terminal N-formyl-L-methionyl-[peptide] + H2O = N-terminal L-methionyl-[peptide] + formate. Removes the formyl group from the N-terminal Met of newly synthesized proteins. Requires at least a dipeptide for an efficient rate of reaction. N-terminal L-methionine is a prerequisite for activity but the enzyme has broad specificity at other positions. The protein is Peptide deformylase of Elusimicrobium minutum (strain Pei191).